We begin with the raw amino-acid sequence, 623 residues long: Transketolase (623 aa).

Met1 is modified (N-acetylmethionine). Residues Lys6 and Lys11 each carry the N6-acetyllysine modification. Residue His37 coordinates substrate. 2 residues coordinate thiamine diphosphate: Ser40 and His77. Ser104 carries the post-translational modification Phosphoserine. Thiamine diphosphate is bound at residue 123–125 (GSL). Residue Lys144 is modified to N6-acetyllysine. Residue Asp155 coordinates Mg(2+). The thiamine diphosphate site is built by Gly156 and Asn185. Mg(2+) contacts are provided by Asn185 and Leu187. An N6-acetyllysine mark is found at Lys204, Lys232, and Lys241. Thiamine diphosphate is bound by residues Lys244 and His258. His258 serves as a coordination point for substrate. An N6-acetyllysine modification is found at Lys260. At Tyr275 the chain carries Phosphotyrosine. Thr287 bears the Phosphothreonine mark. Ser295 is modified (phosphoserine). Substrate contacts are provided by Arg318 and Ser345. The residue at position 345 (Ser345) is a Phosphoserine. Lys352 participates in a covalent cross-link: Glycyl lysine isopeptide (Lys-Gly) (interchain with G-Cter in SUMO2). The active-site Proton donor is the Glu366. Phe392 is a binding site for thiamine diphosphate. His416 and Asp424 together coordinate substrate. Thiamine diphosphate is bound at residue Gln428. Arg474 is a substrate binding site. An N6-acetyllysine mark is found at Lys538 and Lys603.

The protein belongs to the transketolase family. Homodimer. Requires Mg(2+) as cofactor. Ca(2+) serves as cofactor. It depends on Mn(2+) as a cofactor. The cofactor is Co(2+). Thiamine diphosphate is required as a cofactor.

It catalyses the reaction D-sedoheptulose 7-phosphate + D-glyceraldehyde 3-phosphate = aldehydo-D-ribose 5-phosphate + D-xylulose 5-phosphate. In terms of biological role, catalyzes the transfer of a two-carbon ketol group from a ketose donor to an aldose acceptor, via a covalent intermediate with the cofactor thiamine pyrophosphate. The polypeptide is Transketolase (Tkt) (Mus musculus (Mouse)).